Consider the following 563-residue polypeptide: RUN and FYVE domain-containing protein 4 (563 aa).

The RUN domain maps to 33 to 166 (TETSAELHRL…VAFNLDLQRP (134 aa)). Disordered stretches follow at residues 176 to 327 (SESR…TTEG) and 375 to 397 (KKSS…MQED). Composition is skewed to basic and acidic residues over residues 196-205 (GFPEEVRCSR) and 263-284 (ETER…RKFL). The segment covering 285 to 295 (ENSTASIQQQR) has biased composition (polar residues). Positions 297–312 (RAKDVKMQLTGRKVEG) are enriched in basic and acidic residues. Over residues 385–396 (EWTGVTSGTMQE) the composition is skewed to polar residues. Positions 421–462 (QAQCQEQLRAQEAELQALQEQLSRCQKERALLQVKLEQKQQE) form a coiled coil. Residues 428-558 (LRAQEAELQA…RCCPTCAQQE (131 aa)) form an FYVE-type zinc finger. Residues Cys513, Cys516, Cys529, Cys532, Cys537, Cys540, Cys551, and Cys554 each contribute to the Zn(2+) site.

Forms homodimers (via coiled coil domain). Forms a ternary complex with RAB7A and LAMP2; the interaction with RAB7A is mediated by RUFY4 (via RUN and coiled coil domains). Interacts with GTP-, but not GDP-bound ARL8A and ARL8B. Interacts with dynactin/DCTN1 and the dynein intermediate chain DYNC1I1/2. As to expression, expressed in dendritic cells.

The protein localises to the cytoplasmic vesicle. It localises to the autophagosome. It is found in the lysosome. ARL8 effector that promotes the coupling of endolysosomes to dynein-dynactin for retrograde transport along microtubules. Acts by binding both GTP-bound ARL8 and dynein-dynactin. In nonneuronal cells, promotes concentration of endolysosomes in the juxtanuclear area. In hippocampal neurons, drives retrograde transport of endolysosomes from the axon to the soma. Positive regulator of macroautophagy in dendritic cells. Increases autophagic flux, probably by stimulating both autophagosome formation and facilitating tethering with lysosomes. Binds to phosphatidylinositol 3-phosphate (PtdIns3P) through its FYVE-type zinc finger. Positive regulator of osteosclast bone-resorbing activity, possibly by promoting late endosome-lysosome fusion by acting as an adapter protein between RAB7A on late endosomes and LAMP2 on primary lysosomes. The polypeptide is RUN and FYVE domain-containing protein 4 (Rufy4) (Mus musculus (Mouse)).